Here is a 144-residue protein sequence, read N- to C-terminus: uncharacterized protein (144 aa).

Residues 50 to 140 (NQDKAIVVDT…YWKTDNLPLI (91 aa)) enclose the Rhodanese domain.

This is an uncharacterized protein from Buchnera aphidicola subsp. Acyrthosiphon pisum (strain APS) (Acyrthosiphon pisum symbiotic bacterium).